The sequence spans 367 residues: Eukaryotic translation initiation factor 3 subunit H (367 aa).

The 153-residue stretch at 14–166 folds into the MPN domain; that stretch reads VQVEALVVMK…LRAFRLSPTF (153 aa).

This sequence belongs to the eIF-3 subunit H family. In terms of assembly, component of the eukaryotic translation initiation factor 3 (eIF-3) complex.

It is found in the cytoplasm. Its function is as follows. Component of the eukaryotic translation initiation factor 3 (eIF-3) complex, which is involved in protein synthesis of a specialized repertoire of mRNAs and, together with other initiation factors, stimulates binding of mRNA and methionyl-tRNAi to the 40S ribosome. The eIF-3 complex specifically targets and initiates translation of a subset of mRNAs involved in cell proliferation. The protein is Eukaryotic translation initiation factor 3 subunit H of Botryotinia fuckeliana (strain B05.10) (Noble rot fungus).